A 342-amino-acid chain; its full sequence is tRNA N6-adenosine threonylcarbamoyltransferase (342 aa).

Residues His-120 and His-124 each contribute to the Fe cation site. Substrate is bound by residues 142–146, Asp-175, Gly-188, Asp-192, and Asn-281; that span reads VVSGG. Asp-310 is a Fe cation binding site.

This sequence belongs to the KAE1 / TsaD family. It depends on Fe(2+) as a cofactor.

It is found in the cytoplasm. It catalyses the reaction L-threonylcarbamoyladenylate + adenosine(37) in tRNA = N(6)-L-threonylcarbamoyladenosine(37) in tRNA + AMP + H(+). Functionally, required for the formation of a threonylcarbamoyl group on adenosine at position 37 (t(6)A37) in tRNAs that read codons beginning with adenine. Is involved in the transfer of the threonylcarbamoyl moiety of threonylcarbamoyl-AMP (TC-AMP) to the N6 group of A37, together with TsaE and TsaB. TsaD likely plays a direct catalytic role in this reaction. The polypeptide is tRNA N6-adenosine threonylcarbamoyltransferase (Geobacillus kaustophilus (strain HTA426)).